The following is a 252-amino-acid chain: 3-dehydroquinate dehydratase (252 aa).

3-dehydroquinate is bound by residues S21, 46-48 (EWR), and R82. H143 acts as the Proton donor/acceptor in catalysis. The active-site Schiff-base intermediate with substrate is K170. The 3-dehydroquinate site is built by R213, S232, and Q236.

It belongs to the type-I 3-dehydroquinase family. Homodimer.

The catalysed reaction is 3-dehydroquinate = 3-dehydroshikimate + H2O. Its pathway is metabolic intermediate biosynthesis; chorismate biosynthesis; chorismate from D-erythrose 4-phosphate and phosphoenolpyruvate: step 3/7. Functionally, involved in the third step of the chorismate pathway, which leads to the biosynthesis of aromatic amino acids. Catalyzes the cis-dehydration of 3-dehydroquinate (DHQ) and introduces the first double bond of the aromatic ring to yield 3-dehydroshikimate. The chain is 3-dehydroquinate dehydratase from Salmonella choleraesuis (strain SC-B67).